A 334-amino-acid polypeptide reads, in one-letter code: Probable fructose-bisphosphate aldolase class 1 (334 aa).

Belongs to the class I fructose-bisphosphate aldolase family.

The catalysed reaction is beta-D-fructose 1,6-bisphosphate = D-glyceraldehyde 3-phosphate + dihydroxyacetone phosphate. It functions in the pathway carbohydrate degradation; glycolysis; D-glyceraldehyde 3-phosphate and glycerone phosphate from D-glucose: step 4/4. In Xylella fastidiosa (strain 9a5c), this protein is Probable fructose-bisphosphate aldolase class 1.